We begin with the raw amino-acid sequence, 403 residues long: RNA-binding motif, single-stranded-interacting protein 1 (403 aa).

Positions Pro30–Trp56 are disordered. Low complexity predominate over residues Ser40–Ser54. RRM domains are found at residues Thr62–Gln135 and Thr141–Gly226. Thr208 is modified (phosphothreonine).

It localises to the nucleus. Functionally, single-stranded DNA binding protein that interacts with the region upstream of the C-myc gene. Binds specifically to the DNA sequence motif 5'-[AT]CT[AT][AT]T-3'. Probably has a role in DNA replication. In Bos taurus (Bovine), this protein is RNA-binding motif, single-stranded-interacting protein 1 (RBMS1).